A 454-amino-acid chain; its full sequence is MASHLIDFLLIGNNFGTPEMRAVWSEQNRLTRQVDVEIALALAEGDLGVIPQDAASTIASHANASALNIEEIAQDAVRMKHSLMPTIAAIQRQCGEAGEYIHYGVTTQDVVDTATVLQLRQAFDIVVRDTRLVAIELKRLAKKHQHTLMTGRTHGMQALPTTFGFKLAVWLDEFVRHLQRLNEIRERVLVGNINGAIGTYASFGELGPEIERHTLTRLGLNTPNIGWQSARDRFSEYASVTVLISGTLGKIGNELYNLMRTEINEIEEPFSEGKIGSTTMPHKRNPAALEGLASLTAPLFKSAALIHESMKVEHERDAMSWRAEWIALPEINIYLSAQLQNALGILRGMSVNEKQMRANLDLQNGLLLSEKVMFEIGKLLGKQTAHHLVYECSMAAFEQNREFKALLLEHPVLSQHLTADTLDTWLDPANYVGSAPQKVDEVIRYADGTGLLAE.

Residue 106–107 participates in fumarate binding; it reads TT. His-154 acts as the Proton donor/acceptor in catalysis. A fumarate-binding site is contributed by Arg-233. Ser-277 serves as the catalytic Proton donor/acceptor. Fumarate-binding positions include Thr-278 and 283–285; that span reads KRN.

The protein belongs to the lyase 1 family.

The enzyme catalyses N-acetyl-S-(2-succino)-L-cysteine = N-acetyl-L-cysteine + fumarate. It participates in amino-acid biosynthesis; L-cysteine biosynthesis. Functionally, catalyzes the cleavage of N-acetyl-S-(2-succino)cysteine into fumarate and N-acetylcysteine. Is involved in a S-(2-succino)cysteine (2SC) degradation pathway that allows the bacterium to recover cysteine from 2SC and to detoxify 2SC that may be a toxic metabolite. Can also perform the reverse reaction in vitro, and has minor activity against 2SC and other small molecule thiols. This chain is N-acetyl-S-(2-succino)cysteine lyase, found in Dickeya dadantii (strain 3937) (Erwinia chrysanthemi (strain 3937)).